We begin with the raw amino-acid sequence, 163 residues long: 3-isopropylmalate dehydratase small subunit (163 aa).

It belongs to the LeuD family. LeuD type 2 subfamily. In terms of assembly, heterodimer of LeuC and LeuD.

It carries out the reaction (2R,3S)-3-isopropylmalate = (2S)-2-isopropylmalate. It functions in the pathway amino-acid biosynthesis; L-leucine biosynthesis; L-leucine from 3-methyl-2-oxobutanoate: step 2/4. Functionally, catalyzes the isomerization between 2-isopropylmalate and 3-isopropylmalate, via the formation of 2-isopropylmaleate. In Ruminiclostridium cellulolyticum (strain ATCC 35319 / DSM 5812 / JCM 6584 / H10) (Clostridium cellulolyticum), this protein is 3-isopropylmalate dehydratase small subunit.